The sequence spans 239 residues: ATP-dependent dethiobiotin synthetase BioD (239 aa).

Residue 22-27 (GIGKTV) coordinates ATP. Thr-26 serves as a coordination point for Mg(2+). Lys-47 is a catalytic residue. Thr-51 serves as a coordination point for substrate. Residues Asp-59, 124 to 127 (EGVG), and 184 to 185 (NR) each bind ATP. Residues Asp-59 and Glu-124 each contribute to the Mg(2+) site.

The protein belongs to the dethiobiotin synthetase family. As to quaternary structure, homodimer. The cofactor is Mg(2+).

The protein localises to the cytoplasm. The enzyme catalyses (7R,8S)-7,8-diammoniononanoate + CO2 + ATP = (4R,5S)-dethiobiotin + ADP + phosphate + 3 H(+). Its pathway is cofactor biosynthesis; biotin biosynthesis; biotin from 7,8-diaminononanoate: step 1/2. In terms of biological role, catalyzes a mechanistically unusual reaction, the ATP-dependent insertion of CO2 between the N7 and N8 nitrogen atoms of 7,8-diaminopelargonic acid (DAPA, also called 7,8-diammoniononanoate) to form a ureido ring. The protein is ATP-dependent dethiobiotin synthetase BioD of Chlorobaculum tepidum (strain ATCC 49652 / DSM 12025 / NBRC 103806 / TLS) (Chlorobium tepidum).